The chain runs to 246 residues: Probable H/ACA ribonucleoprotein complex subunit 1-like protein (246 aa).

2 disordered regions span residues 1–61 and 155–246; these read MSFR…GGYD and PQVG…TKFD. RGG-box stretches follow at residues 4–59 and 161–223; these read RGGR…GRGG and RGRG…RGRG. The span at 168 to 180 shows a compositional bias: basic and acidic residues; sequence RGGDRGRGGDRGR. Residues 181–221 are compositionally biased toward gly residues; sequence GGFGGRGGGGGGFRGGSRGGFGGGDRGGFRGGRGGDFGGRG.

It belongs to the GAR1 family. In terms of assembly, component of the small nucleolar ribonucleoprotein particle containing H/ACA-type snoRNAs (H/ACA snoRNPs).

It localises to the nucleus. Its subcellular location is the nucleolus. Required for ribosome biogenesis. Part of a complex which catalyzes pseudouridylation of rRNA. This involves the isomerization of uridine such that the ribose is subsequently attached to C5, instead of the normal N1. Pseudouridine ('psi') residues may serve to stabilize the conformation of rRNAs. This chain is Probable H/ACA ribonucleoprotein complex subunit 1-like protein, found in Caenorhabditis briggsae.